The following is a 61-amino-acid chain: MTDLKITLIRSVAHRLPEQRKVVKALGLGKINSTVVQPDNAATRGALMKIAHLISVEEVNK.

The protein belongs to the universal ribosomal protein uL30 family. As to quaternary structure, part of the 50S ribosomal subunit.

This is Large ribosomal subunit protein uL30 from Lactobacillus delbrueckii subsp. bulgaricus (strain ATCC 11842 / DSM 20081 / BCRC 10696 / JCM 1002 / NBRC 13953 / NCIMB 11778 / NCTC 12712 / WDCM 00102 / Lb 14).